We begin with the raw amino-acid sequence, 146 residues long: Hemoglobin subunit beta (146 aa).

The residue at position 1 (Val-1) is an N-acetylvaline. The Globin domain maps to 2–146 (HLTDAEKAAI…VASALAHKYH (145 aa)). A heme b-binding site is contributed by His-63. Lys-82 bears the N6-acetyllysine mark. His-92 provides a ligand contact to heme b. Cys-93 carries the S-nitrosocysteine modification. Lys-144 carries the N6-acetyllysine modification.

The protein belongs to the globin family. As to quaternary structure, heterotetramer of two alpha chains and two beta chains. Red blood cells.

Functionally, involved in oxygen transport from the lung to the various peripheral tissues. This chain is Hemoglobin subunit beta (HBB), found in Microtus xanthognathus (Yellow-cheeked vole).